The chain runs to 221 residues: PKHD-type hydroxylase A9601_13531 (221 aa).

In terms of domain architecture, Fe2OG dioxygenase spans 80–174 (LIHGIMFTKS…RIVCVGWIES (95 aa)). The Fe cation site is built by H98, D100, and H155. A 2-oxoglutarate-binding site is contributed by R165.

It depends on Fe(2+) as a cofactor. L-ascorbate serves as cofactor.

The polypeptide is PKHD-type hydroxylase A9601_13531 (Prochlorococcus marinus (strain AS9601)).